Here is a 359-residue protein sequence, read N- to C-terminus: MKRPPHHPVTVADVGGTHLRWARWSPDGGLGEVHTTPSPGHARRPGAGAADLQAELIRELASRVEPGARAGVSLGAAMDHHSGTAYASAPLWGPQVSPFDVPAALRAARPDVHWTVVNDVTAGLLHLAEMVRDAGVRKACLVTISTGIACRTMDLRTGGIPVDAAGLQGEIGHLPATVLADGVPVVTRCDCGEPGHVAASSSGPGIRRVAAVLARRDPATWAGSGPTTRMMAGSGFEDAFRAALDDGDPVAADLLTAVTAPIADLLRTALCLDPELDLIALTGGVAHGLEPHYSAAVHDHLRRRGLYLTSEREPDWLTGRIRVVPPATADPLVGAGLAALAAGPVPAYSGGGREALVGR.

Residues 28–48 form a disordered region; that stretch reads GGLGEVHTTPSPGHARRPGAG.

The protein belongs to the ROK (NagC/XylR) family.

The enzyme catalyses 2-epi-5-epi-valiolone + ATP = 2-epi-5-epi-valiolone 7-phosphate + ADP + H(+). Catalyzes the conversion of 2-epi-5-epi-valiolone to 2-epi-5-epi-valiolone 7-phosphate. Involved in the biosynthesis of the acarviose moiety of the alpha-glucosidase inhibitor acarbose. This Actinoplanes sp. (strain ATCC 31044 / CBS 674.73 / SE50/110) protein is 2-epi-5-epi-valiolone 7-kinase.